Reading from the N-terminus, the 348-residue chain is Uroporphyrinogen decarboxylase (348 aa).

Residues 28–32 (RQAGR), Asp-78, Tyr-154, Thr-209, and His-325 contribute to the substrate site.

This sequence belongs to the uroporphyrinogen decarboxylase family. As to quaternary structure, homodimer.

The protein localises to the cytoplasm. It carries out the reaction uroporphyrinogen III + 4 H(+) = coproporphyrinogen III + 4 CO2. It functions in the pathway porphyrin-containing compound metabolism; protoporphyrin-IX biosynthesis; coproporphyrinogen-III from 5-aminolevulinate: step 4/4. Functionally, catalyzes the decarboxylation of four acetate groups of uroporphyrinogen-III to yield coproporphyrinogen-III. This chain is Uroporphyrinogen decarboxylase, found in Rhodopseudomonas palustris (strain BisB5).